A 188-amino-acid chain; its full sequence is Probable manganese efflux pump MntP (188 aa).

Helical transmembrane passes span 3–23 (ITATVLLAFGMSMDAFAASIG), 66–86 (LEWNHWIAFVLLIFLGGRMII), 106–128 (WLLVTTAIATSLDAMAVGVGLAF), 143–163 (ATLIMSTLGMMVGRFIGPILG), and 168–188 (ILGGLVLIGIGVQILWTHFHG).

This sequence belongs to the MntP (TC 9.B.29) family.

The protein localises to the cell inner membrane. Its function is as follows. Probably functions as a manganese efflux pump. This chain is Probable manganese efflux pump MntP, found in Escherichia fergusonii (strain ATCC 35469 / DSM 13698 / CCUG 18766 / IAM 14443 / JCM 21226 / LMG 7866 / NBRC 102419 / NCTC 12128 / CDC 0568-73).